The primary structure comprises 317 residues: Transaldolase (317 aa).

Lys126 (schiff-base intermediate with substrate) is an active-site residue.

The protein belongs to the transaldolase family. Type 1 subfamily. Homodimer.

It localises to the cytoplasm. It catalyses the reaction D-sedoheptulose 7-phosphate + D-glyceraldehyde 3-phosphate = D-erythrose 4-phosphate + beta-D-fructose 6-phosphate. The protein operates within carbohydrate degradation; pentose phosphate pathway; D-glyceraldehyde 3-phosphate and beta-D-fructose 6-phosphate from D-ribose 5-phosphate and D-xylulose 5-phosphate (non-oxidative stage): step 2/3. In terms of biological role, transaldolase is important for the balance of metabolites in the pentose-phosphate pathway. The sequence is that of Transaldolase from Burkholderia ambifaria (strain ATCC BAA-244 / DSM 16087 / CCUG 44356 / LMG 19182 / AMMD) (Burkholderia cepacia (strain AMMD)).